The following is a 199-amino-acid chain: Large ribosomal subunit protein bL9 (199 aa).

The tract at residues 169–199 (TGGFTEEYDPNAEPGEIPTELLEGGEEAAEA) is disordered.

Belongs to the bacterial ribosomal protein bL9 family.

Binds to the 23S rRNA. The polypeptide is Large ribosomal subunit protein bL9 (Novosphingobium aromaticivorans (strain ATCC 700278 / DSM 12444 / CCUG 56034 / CIP 105152 / NBRC 16084 / F199)).